The chain runs to 376 residues: Putative glutamate--cysteine ligase 2-1 (376 aa).

Belongs to the glutamate--cysteine ligase type 2 family. YbdK subfamily.

The enzyme catalyses L-cysteine + L-glutamate + ATP = gamma-L-glutamyl-L-cysteine + ADP + phosphate + H(+). In terms of biological role, ATP-dependent carboxylate-amine ligase which exhibits weak glutamate--cysteine ligase activity. This is Putative glutamate--cysteine ligase 2-1 from Mycobacterium sp. (strain JLS).